Here is a 141-residue protein sequence, read N- to C-terminus: ATP synthase epsilon chain (141 aa).

The protein belongs to the ATPase epsilon chain family. As to quaternary structure, F-type ATPases have 2 components, CF(1) - the catalytic core - and CF(0) - the membrane proton channel. CF(1) has five subunits: alpha(3), beta(3), gamma(1), delta(1), epsilon(1). CF(0) has three main subunits: a, b and c.

It is found in the cell inner membrane. Its function is as follows. Produces ATP from ADP in the presence of a proton gradient across the membrane. In Gluconacetobacter diazotrophicus (strain ATCC 49037 / DSM 5601 / CCUG 37298 / CIP 103539 / LMG 7603 / PAl5), this protein is ATP synthase epsilon chain.